The following is a 1683-amino-acid chain: ABC transporter 7 (1683 aa).

The chain crosses the membrane as a helical span at residues 24-44 (DYLRILLPAVVIGLSVLNLGF). The disordered stretch occupies residues 53-93 (RSKSPSTHAYAPVSNGDNSRPGAHRTDISPDDDAIAQDDED). Positions 81–93 (SPDDDAIAQDDED) are enriched in acidic residues. 4 helical membrane-spanning segments follow: residues 127 to 147 (LSVV…VIAL), 157 to 177 (TLTG…LATL), 190 to 210 (HLWN…IGIF), and 221 to 241 (LAQI…FMAI). Residue Asn247 is glycosylated (N-linked (GlcNAc...) asparagine). Helical transmembrane passes span 336–356 (GWAV…KAIL) and 368–388 (SVVW…SLGD). Residues 338–664 (AVMSGMFTFA…LGDMLAHVQE (327 aa)) enclose the ABC transmembrane type-1 1 domain. Residues 451–473 (GDNDESEDGKDGDKDKEDSSDEQ) form a disordered region. Asn489 carries N-linked (GlcNAc...) asparagine glycosylation. Helical transmembrane passes span 496-516 (YLHF…VLLY) and 518-538 (VLGM…PVNI). N-linked (GlcNAc...) asparagine glycosylation occurs at Asn545. 2 helical membrane passes run 602–622 (VWAC…FFSF) and 632–648 (PLHP…FMLL). Residues 700–949 (IALKDAAFIW…GALGEEIAQK (250 aa)) enclose the ABC transporter 1 domain. An ATP-binding site is contributed by 742–749 (GPTGSGKT). Positions 952 to 998 (SETPNISRIPSRVPSSVGEGSGNTLLDTDGDDHLSKPKNAKKAKKAE) are disordered. Asn956 carries N-linked (GlcNAc...) asparagine glycosylation. A helical transmembrane segment spans residues 1016–1036 (LYLASMGSWWFWVVAGCIFIS). The region spanning 1028-1351 (VVAGCIFISQ…NILWLVRLYS (324 aa)) is the ABC transmembrane type-1 2 domain. Asn1097 carries N-linked (GlcNAc...) asparagine glycosylation. A run of 3 helical transmembrane segments spans residues 1111–1131 (AQYY…TAFL), 1182–1202 (VDQE…GITV), and 1204–1224 (VVLI…ITIA). Residue Asn1277 is glycosylated (N-linked (GlcNAc...) asparagine). 2 helical membrane passes run 1304 to 1324 (LLGD…IGVI) and 1327 to 1347 (GWAG…LWLV). The region spanning 1392–1649 (VEFINYTTSY…GEGGSFKSMC (258 aa)) is the ABC transporter 2 domain. 2 N-linked (GlcNAc...) asparagine glycosylation sites follow: Asn1396 and Asn1411. 1426–1433 (GRTGAGKS) contacts ATP. Residues Asn1541 and Asn1552 are each glycosylated (N-linked (GlcNAc...) asparagine).

It belongs to the ABC transporter superfamily.

Its subcellular location is the membrane. ABC transporter; part of the gene cluster that mediates the biosynthesis of pyriculol and pyriculariol, two heptaketides that induce lesion formation upon application on rice leaves but are dispensable for pathogenicity. With the MFS transporter MFS1, is most likely responsible for pyriculol and pyriculariol secretion and thereby may contribute to intrinsic resistance. In Pyricularia oryzae (strain 70-15 / ATCC MYA-4617 / FGSC 8958) (Rice blast fungus), this protein is ABC transporter 7.